The sequence spans 369 residues: Glutamate 5-kinase (369 aa).

Position 9 (lysine 9) interacts with ATP. Serine 49, aspartate 136, and asparagine 148 together coordinate substrate. Residues threonine 168–aspartate 169 and threonine 210–lysine 216 each bind ATP. Positions arginine 275–tryptophan 355 constitute a PUA domain.

This sequence belongs to the glutamate 5-kinase family.

It is found in the cytoplasm. It carries out the reaction L-glutamate + ATP = L-glutamyl 5-phosphate + ADP. It functions in the pathway amino-acid biosynthesis; L-proline biosynthesis; L-glutamate 5-semialdehyde from L-glutamate: step 1/2. Catalyzes the transfer of a phosphate group to glutamate to form L-glutamate 5-phosphate. This Neisseria meningitidis serogroup C / serotype 2a (strain ATCC 700532 / DSM 15464 / FAM18) protein is Glutamate 5-kinase.